A 266-amino-acid polypeptide reads, in one-letter code: DNA damage-regulated autophagy modulator protein 2 (266 aa).

A run of 6 helical transmembrane segments spans residues 8–28, 53–73, 88–108, 118–138, 160–180, and 207–227; these read LSFL…FSYI, KCLF…TIYV, IIKL…GLSI, FAAH…YMFV, LLLV…SSVL, and ITTA…LTYI.

It belongs to the DRAM/TMEM150 family. Expression is down-regulated in ovarian tumors (at protein level). Widely expressed with highest levels in placenta and heart. Expressed in the retina. Not detected in brain or thymus.

It localises to the lysosome membrane. Its subcellular location is the photoreceptor inner segment. The protein localises to the apical cell membrane. Functionally, plays a role in the initiation of autophagy. In the retina, might be involved in the process of photoreceptor cells renewal and recycling to preserve visual function. Induces apoptotic cell death when coexpressed with DRAM1. The polypeptide is DNA damage-regulated autophagy modulator protein 2 (DRAM2) (Homo sapiens (Human)).